The sequence spans 302 residues: Sulfate adenylyltransferase subunit 2 (302 aa).

Belongs to the PAPS reductase family. CysD subfamily. Heterodimer composed of CysD, the smaller subunit, and CysN.

The catalysed reaction is sulfate + ATP + H(+) = adenosine 5'-phosphosulfate + diphosphate. It participates in sulfur metabolism; hydrogen sulfide biosynthesis; sulfite from sulfate: step 1/3. With CysN forms the ATP sulfurylase (ATPS) that catalyzes the adenylation of sulfate producing adenosine 5'-phosphosulfate (APS) and diphosphate, the first enzymatic step in sulfur assimilation pathway. APS synthesis involves the formation of a high-energy phosphoric-sulfuric acid anhydride bond driven by GTP hydrolysis by CysN coupled to ATP hydrolysis by CysD. The protein is Sulfate adenylyltransferase subunit 2 of Shigella boydii serotype 4 (strain Sb227).